The primary structure comprises 178 residues: Ribosome maturation factor RimM (178 aa).

A PRC barrel domain is found at 101-178 (EGEFYWYQLQ…EMRVDWDADF (78 aa)).

It belongs to the RimM family. As to quaternary structure, binds ribosomal protein uS19.

It is found in the cytoplasm. An accessory protein needed during the final step in the assembly of 30S ribosomal subunit, possibly for assembly of the head region. Essential for efficient processing of 16S rRNA. May be needed both before and after RbfA during the maturation of 16S rRNA. It has affinity for free ribosomal 30S subunits but not for 70S ribosomes. The sequence is that of Ribosome maturation factor RimM from Ectopseudomonas mendocina (strain ymp) (Pseudomonas mendocina).